We begin with the raw amino-acid sequence, 347 residues long: Dehydratase asqC (347 aa).

Positions Met1–Ala18 are cleaved as a signal peptide. Asn51, Asn103, Asn131, Asn143, Asn215, Asn264, and Asn281 each carry an N-linked (GlcNAc...) asparagine glycan.

It catalyses the reaction [(1'E)-5'-(3',3'-dimethyloxiran-2'-yl)-3'-hydroxy-3'-methylpent-1'-en-1'-yl]-quinolinone B = (1'E,3'E)-5-(3,3-dimethyloxiran-2-yl)-3-methylhexa-1,3-dienyl-quinolinone B + H2O. It participates in secondary metabolite biosynthesis. Its pathway is alkaloid biosynthesis. It functions in the pathway mycotoxin biosynthesis. Functionally, dehydratase; part of the gene cluster that mediates the biosynthesis of the aspoquinolone mycotoxins. Within the pathway, the dehydratase asqC catalyzes the dehydratation of the epoxide at C-3 to produce (1'E,3'E)-5-(3,3-dimethyloxiran-2-yl)-3-methylhexa-1,3-dienyl-quinolinone B. The first step of the pathway is catalyzed by the nonribosomal peptide synthetase asqK that condenses anthranilic acid and O-methyl-L-tyrosine to produce 4'-methoxycyclopeptin. 4'-methoxycyclopeptin is then converted to 4'-methoxydehydrocyclopeptin by the ketoglutarate-dependent dioxygenase asqJ. AsqJ also converts its first product 4'-methoxydehydrocyclopeptin to 4'-methoxycyclopenin. The following conversion of 4'-methoxycyclopenin into 4'-methoxyviridicatin is catalyzed by the cyclopenase asqI. 4'-methoxyviridicatin is the precursor of quinolone natural products, and is further converted to quinolinone B. The prenyltransferase asqH1 then catalyzes the canonical Friedel-Crafts alkylation of quinolinone B with dimethylallyl cation to yield dimethylallyl quinolone, which is subjected to FAD-dependent dehydrogenation by the FAD-linked oxidoreductase asqF to yield conjugated aryl diene. The delta(3') double bond then serves as the site of the second alkylation with DMAPP catalyzed by the prenyltransferase asqH2 to yield a carbenium ion intermediate, which can be attacked by H(2)O to yield a styrenyl quinolone containing a C3'-hydroxyprenyl chain. The FAD-dependent monooxygenase asqG performs epoxidation of the terminal C7'-C8' olefin. Finally, after dehydratation of the epoxide at C3 by asqC, the quinolone epoxide rearrangement protein asqO catalyzes an enzymatic 3-exo-tet cyclization to yield the cyclopropyl-THF ring system in aspoquinolone. This Emericella nidulans (strain FGSC A4 / ATCC 38163 / CBS 112.46 / NRRL 194 / M139) (Aspergillus nidulans) protein is Dehydratase asqC.